A 236-amino-acid polypeptide reads, in one-letter code: Carbonyl reductase family member 4 (236 aa).

NADP(+) contacts are provided by residues 11–14, 34–35, Asp-55, and 82–84; these read SRGI, RD, and SAG. Substrate is bound at residue Ser-134. Residues Tyr-147, Lys-151, and 180–182 each bind NADP(+); that span reads IHT. Residue Tyr-147 is the Proton acceptor of the active site.

It belongs to the short-chain dehydrogenases/reductases (SDR) family. In terms of assembly, homotetramer (in vitro). Heterotetramer with HSD17B8; contains two molecules each of HSD17B8 and CBR4.

It localises to the mitochondrion matrix. It functions in the pathway lipid metabolism; fatty acid biosynthesis. Functionally, the heterotetramer with HSD17B8 has NADH-dependent 3-ketoacyl-acyl carrier protein reductase activity, and thereby plays a role in mitochondrial fatty acid biosynthesis. Within the heterotetramer, HSD17B8 binds NADH; CBR4 binds NADPD. The homotetramer has NADPH-dependent quinone reductase activity. Both homotetramer and the heterotetramer have broad in vitro substrate specificity and can reduce 9,10-phenanthrenequinone, 1,4-benzoquinone and various other o-quinones and p-quinones. This is Carbonyl reductase family member 4 (cbr4) from Xenopus tropicalis (Western clawed frog).